A 139-amino-acid polypeptide reads, in one-letter code: Transcription antitermination protein NusB (139 aa).

It belongs to the NusB family.

Involved in transcription antitermination. Required for transcription of ribosomal RNA (rRNA) genes. Binds specifically to the boxA antiterminator sequence of the ribosomal RNA (rrn) operons. In Rubrobacter xylanophilus (strain DSM 9941 / JCM 11954 / NBRC 16129 / PRD-1), this protein is Transcription antitermination protein NusB.